We begin with the raw amino-acid sequence, 940 residues long: BTB/POZ domain-containing protein FBL11 (940 aa).

Residues 41–109 (WDMSEILSYG…LYGYDIEITS (69 aa)) form the BTB domain. Positions 155–258 (IQIWSFGLEH…FSLLPLWFIA (104 aa)) constitute a BACK domain.

It functions in the pathway protein modification; protein ubiquitination. In terms of biological role, may act as a substrate-specific adapter of an E3 ubiquitin-protein ligase complex (CUL3-RBX1-BTB) which mediates the ubiquitination and subsequent proteasomal degradation of target proteins. The chain is BTB/POZ domain-containing protein FBL11 (FBL11) from Arabidopsis thaliana (Mouse-ear cress).